The following is a 635-amino-acid chain: ATP-dependent zinc metalloprotease FtsH (635 aa).

Over 1-6 the chain is Cytoplasmic; the sequence is MNNQGR. A helical membrane pass occupies residues 7-27; the sequence is SILTWAALFVFVILLFNVFQS. Topologically, residues 28–103 are periplasmic; sequence DGLLGGRNNI…VVPLETRMNT (76 aa). A helical transmembrane segment spans residues 104 to 124; that stretch reads FLGFLISWFPMLLLIGVWVFF. Topologically, residues 125 to 635 are cytoplasmic; that stretch reads MRQMHGGGKA…KKAKKESTNI (511 aa). 195-202 serves as a coordination point for ATP; sequence GPPGTGKT. H417 provides a ligand contact to Zn(2+). E418 is an active-site residue. Positions 421 and 495 each coordinate Zn(2+). Positions 600-635 are disordered; it reads SEEENKFPFNDSPTIKIDKEKSPEKAKKAKKESTNI. Residues 615–635 show a composition bias toward basic and acidic residues; the sequence is KIDKEKSPEKAKKAKKESTNI.

It in the central section; belongs to the AAA ATPase family. In the C-terminal section; belongs to the peptidase M41 family. In terms of assembly, homohexamer. The cofactor is Zn(2+).

Its subcellular location is the cell inner membrane. Functionally, acts as a processive, ATP-dependent zinc metallopeptidase for both cytoplasmic and membrane proteins. Plays a role in the quality control of integral membrane proteins. The protein is ATP-dependent zinc metalloprotease FtsH of Rickettsia felis (strain ATCC VR-1525 / URRWXCal2) (Rickettsia azadi).